Here is a 532-residue protein sequence, read N- to C-terminus: Glucose-6-phosphate isomerase (532 aa).

Glu330 functions as the Proton donor in the catalytic mechanism. Catalysis depends on residues His359 and Lys461.

It belongs to the GPI family.

The protein localises to the cytoplasm. The enzyme catalyses alpha-D-glucose 6-phosphate = beta-D-fructose 6-phosphate. Its pathway is carbohydrate biosynthesis; gluconeogenesis. It participates in carbohydrate degradation; glycolysis; D-glyceraldehyde 3-phosphate and glycerone phosphate from D-glucose: step 2/4. Catalyzes the reversible isomerization of glucose-6-phosphate to fructose-6-phosphate. The protein is Glucose-6-phosphate isomerase of Synechococcus sp. (strain CC9605).